The primary structure comprises 101 residues: Phosphoprotein OPG062 (101 aa).

The disordered stretch occupies residues 50-73; it reads KPSSPTCERRPSSPSRCERMNNPG. Over residues 56-68 the composition is skewed to basic and acidic residues; that stretch reads CERRPSSPSRCER.

This sequence belongs to the orthopoxvirus OPG062 family. As to quaternary structure, self-associates to form high molecular-weight forms. Interacts with protein OPG157. Interacts with host RICTOR and RPTOR; these interactions disrupt the mTORC1 and mTORC2 crosstalk.

Its subcellular location is the virion. Functionally, plays an essential role in virion assembly and morphogenesis. Also plays a role in the inhibition of host immune response by dysregulating mTOR. Sequesters host RICTOR and RPTOR, thereby disrupting mTORC1 and mTORC2 crosstalk. In turn, blocks the host antiviral response in part through mTOR-dependent degradation of cGAS, the primary poxvirus sensor. The protein is Phosphoprotein OPG062 (OPG062) of Monkeypox virus.